Consider the following 81-residue polypeptide: Putative truncated GMC-type inactive oxidoreductase R833 (81 aa).

This sequence belongs to the GMC oxidoreductase family.

The sequence is that of Putative truncated GMC-type inactive oxidoreductase R833 from Acanthamoeba polyphaga mimivirus (APMV).